The following is a 305-amino-acid chain: J domain-containing protein 1 (305 aa).

The J domain maps to 91–163 (TPYEVLGLVK…SRRRMYDMYA (73 aa)). A helical membrane pass occupies residues 212 to 232 (WGMVVWALCMLAGFQVMAFLI).

This sequence belongs to the DnaJ family.

The protein localises to the mitochondrion membrane. Functionally, probable chaperone. The chain is J domain-containing protein 1 (JID1) from Eremothecium gossypii (strain ATCC 10895 / CBS 109.51 / FGSC 9923 / NRRL Y-1056) (Yeast).